Here is a 275-residue protein sequence, read N- to C-terminus: Formamidopyrimidine-DNA glycosylase (275 aa).

P2 functions as the Schiff-base intermediate with DNA in the catalytic mechanism. E3 (proton donor) is an active-site residue. K59 (proton donor; for beta-elimination activity) is an active-site residue. DNA is bound by residues H94 and R113. An FPG-type zinc finger spans residues 241–275 (LVHTHAKEPCQICGTIIQKTKVNGRGTYYCPNCQN). Catalysis depends on R265, which acts as the Proton donor; for delta-elimination activity.

Belongs to the FPG family. As to quaternary structure, monomer. It depends on Zn(2+) as a cofactor.

The enzyme catalyses Hydrolysis of DNA containing ring-opened 7-methylguanine residues, releasing 2,6-diamino-4-hydroxy-5-(N-methyl)formamidopyrimidine.. The catalysed reaction is 2'-deoxyribonucleotide-(2'-deoxyribose 5'-phosphate)-2'-deoxyribonucleotide-DNA = a 3'-end 2'-deoxyribonucleotide-(2,3-dehydro-2,3-deoxyribose 5'-phosphate)-DNA + a 5'-end 5'-phospho-2'-deoxyribonucleoside-DNA + H(+). Functionally, involved in base excision repair of DNA damaged by oxidation or by mutagenic agents. Acts as a DNA glycosylase that recognizes and removes damaged bases. Has a preference for oxidized purines, such as 7,8-dihydro-8-oxoguanine (8-oxoG). Has AP (apurinic/apyrimidinic) lyase activity and introduces nicks in the DNA strand. Cleaves the DNA backbone by beta-delta elimination to generate a single-strand break at the site of the removed base with both 3'- and 5'-phosphates. This chain is Formamidopyrimidine-DNA glycosylase, found in Ureaplasma parvum serovar 3 (strain ATCC 700970).